We begin with the raw amino-acid sequence, 450 residues long: tRNA modification GTPase MnmE (450 aa).

Residues arginine 24, glutamate 82, and lysine 121 each contribute to the (6S)-5-formyl-5,6,7,8-tetrahydrofolate site. The region spanning glycine 218–glycine 375 is the TrmE-type G domain. Asparagine 228 is a binding site for K(+). GTP-binding positions include asparagine 228–serine 233, threonine 247–threonine 253, aspartate 272–glycine 275, and serine 356–arginine 358. Residue serine 232 participates in Mg(2+) binding. Residues threonine 247, isoleucine 249, and threonine 252 each contribute to the K(+) site. Mg(2+) is bound at residue threonine 253. Position 450 (lysine 450) interacts with (6S)-5-formyl-5,6,7,8-tetrahydrofolate.

It belongs to the TRAFAC class TrmE-Era-EngA-EngB-Septin-like GTPase superfamily. TrmE GTPase family. In terms of assembly, homodimer. Heterotetramer of two MnmE and two MnmG subunits. Requires K(+) as cofactor.

Its subcellular location is the cytoplasm. Exhibits a very high intrinsic GTPase hydrolysis rate. Involved in the addition of a carboxymethylaminomethyl (cmnm) group at the wobble position (U34) of certain tRNAs, forming tRNA-cmnm(5)s(2)U34. The sequence is that of tRNA modification GTPase MnmE from Laribacter hongkongensis (strain HLHK9).